The following is a 323-amino-acid chain: tRNA dimethylallyltransferase (323 aa).

ATP is bound at residue 12 to 19 (GPTAAGKT). Substrate is bound at residue 14–19 (TAAGKT). Interaction with substrate tRNA stretches follow at residues 37 to 40 (DSAL) and 161 to 165 (QRLMR).

Belongs to the IPP transferase family. In terms of assembly, monomer. Mg(2+) serves as cofactor.

The enzyme catalyses adenosine(37) in tRNA + dimethylallyl diphosphate = N(6)-dimethylallyladenosine(37) in tRNA + diphosphate. Catalyzes the transfer of a dimethylallyl group onto the adenine at position 37 in tRNAs that read codons beginning with uridine, leading to the formation of N6-(dimethylallyl)adenosine (i(6)A). The sequence is that of tRNA dimethylallyltransferase from Pseudomonas paraeruginosa (strain DSM 24068 / PA7) (Pseudomonas aeruginosa (strain PA7)).